The following is a 176-amino-acid chain: Interleukin-7 (176 aa).

The first 25 residues, 1–25, serve as a signal peptide directing secretion; it reads MFHVSFRYIFGIPPLILVLLPVASS. 3 disulfide bridges follow: C27-C165, C58-C153, and C71-C116. N-linked (GlcNAc...) asparagine glycosylation is found at N94, N115, and N140.

This sequence belongs to the IL-7/IL-9 family.

The protein resides in the secreted. In terms of biological role, hematopoietic growth factor capable of stimulating the proliferation of lymphoid progenitors. It is important for proliferation during certain stages of B-cell maturation. This Sus scrofa (Pig) protein is Interleukin-7 (IL7).